Consider the following 371-residue polypeptide: Aminomethyltransferase (371 aa).

Belongs to the GcvT family. The glycine cleavage system is composed of four proteins: P, T, L and H.

The catalysed reaction is N(6)-[(R)-S(8)-aminomethyldihydrolipoyl]-L-lysyl-[protein] + (6S)-5,6,7,8-tetrahydrofolate = N(6)-[(R)-dihydrolipoyl]-L-lysyl-[protein] + (6R)-5,10-methylene-5,6,7,8-tetrahydrofolate + NH4(+). Its function is as follows. The glycine cleavage system catalyzes the degradation of glycine. The polypeptide is Aminomethyltransferase (Nitrosococcus oceani (strain ATCC 19707 / BCRC 17464 / JCM 30415 / NCIMB 11848 / C-107)).